The following is an 877-amino-acid chain: Clumping factor B (877 aa).

The N-terminal stretch at 1–44 is a signal peptide; sequence MKKRIDYLSNKQNKYSIRRFTVGTTSVIVGATILFGIGNHQAQA. Positions 15–26 match the YSIRK-G/S signaling motif motif; sequence YSIRRFTVGTTS. Composition is skewed to polar residues over residues 44–61 and 68–95; these read ASEQ…NASA and MIET…NVDS. Residues 44-192 are disordered; that stretch reads ASEQSNDTTQ…QGTSKPSVRT (149 aa). Positions 45 to 542 are ligand binding A region; that stretch reads SEQSNDTTQS…GSADGDSAVN (498 aa). The span at 96 to 119 shows a compositional bias: low complexity; that stretch reads TTKPMSTQTSNTTTTEPASTNETP. The segment covering 120 to 189 has biased composition (polar residues); it reads QPTAIKNQAT…SNAQGTSKPS (70 aa). The MIDAS-like motif motif lies at 272 to 276; the sequence is DYSNS. The disordered stretch occupies residues 530-849; that stretch reads YGGGSADGDS…ETGDKSENTN (320 aa). Positions 545–555 are enriched in pro residues; sequence DPTPGPPVDPE. A compositionally biased stretch (acidic residues) spans 556–801; the sequence is PSPDPEPEPT…SDSDSDSDSD (246 aa). Residues 805–816 are compositionally biased toward polar residues; sequence RVTPPNNEQKAP. Basic and acidic residues predominate over residues 833–846; it reads HKTDALPETGDKSE. Residues 838–842 carry the LPXTG sorting signal motif; it reads LPETG. Thr841 bears the Pentaglycyl murein peptidoglycan amidated threonine mark. A propeptide spans 842–877 (removed by sortase); it reads GDKSENTNATLFGAMMALLGSLLLFRKRKQDHKEKA.

It belongs to the serine-aspartate repeat-containing protein (SDr) family. Proteolytically cleaved by aureolysin (aur). This cleavage leads to the inactivation of ClfB.

Its subcellular location is the secreted. It localises to the cell wall. Its function is as follows. Cell surface-associated protein implicated in virulence by promoting bacterial attachment to both alpha- and beta-chains of human fibrinogen and inducing the formation of bacterial clumps. Partly responsible for mediating bacterial attachment to the highly keratinized squamous epithelial cells from the nasal cavity via an interaction with cytokeratin K10 (K10). Also promotes bacterial attachment to cultured keratinocytes, possibly through an interaction with cytokeratin K10. Binds mouse cytokeratin K10. Activates human platelet aggregation. The chain is Clumping factor B (clfB) from Staphylococcus aureus (strain NCTC 8325 / PS 47).